A 291-amino-acid chain; its full sequence is Pyridoxal 5'-phosphate synthase subunit PdxS (291 aa).

D-ribose 5-phosphate is bound at residue aspartate 23. Lysine 80 serves as the catalytic Schiff-base intermediate with D-ribose 5-phosphate. Glycine 152 is a binding site for D-ribose 5-phosphate. Residue arginine 164 coordinates D-glyceraldehyde 3-phosphate. D-ribose 5-phosphate is bound by residues glycine 213 and 234–235 (GS).

Belongs to the PdxS/SNZ family. In the presence of PdxT, forms a dodecamer of heterodimers.

It carries out the reaction aldehydo-D-ribose 5-phosphate + D-glyceraldehyde 3-phosphate + L-glutamine = pyridoxal 5'-phosphate + L-glutamate + phosphate + 3 H2O + H(+). The protein operates within cofactor biosynthesis; pyridoxal 5'-phosphate biosynthesis. Catalyzes the formation of pyridoxal 5'-phosphate from ribose 5-phosphate (RBP), glyceraldehyde 3-phosphate (G3P) and ammonia. The ammonia is provided by the PdxT subunit. Can also use ribulose 5-phosphate and dihydroxyacetone phosphate as substrates, resulting from enzyme-catalyzed isomerization of RBP and G3P, respectively. The chain is Pyridoxal 5'-phosphate synthase subunit PdxS from Streptococcus pneumoniae (strain P1031).